Consider the following 151-residue polypeptide: Large ribosomal subunit protein bL9 (151 aa).

The protein belongs to the bacterial ribosomal protein bL9 family.

Functionally, binds to the 23S rRNA. This Chlorobium chlorochromatii (strain CaD3) protein is Large ribosomal subunit protein bL9.